A 289-amino-acid chain; its full sequence is Eukaryotic translation initiation factor 3 subunit G (289 aa).

Residues 1–33 are disordered; the sequence is MSRPTKADWADDEEFDDPSALPPQQITTNKDGT. The RRM domain occupies 209–287; it reads ATLRVTNVSE…LILRVEFAKR (79 aa).

The protein belongs to the eIF-3 subunit G family. In terms of assembly, component of the eukaryotic translation initiation factor 3 (eIF-3) complex.

The protein localises to the cytoplasm. Functionally, RNA-binding component of the eukaryotic translation initiation factor 3 (eIF-3) complex, which is involved in protein synthesis of a specialized repertoire of mRNAs and, together with other initiation factors, stimulates binding of mRNA and methionyl-tRNAi to the 40S ribosome. The eIF-3 complex specifically targets and initiates translation of a subset of mRNAs involved in cell proliferation. This subunit can bind 18S rRNA. The polypeptide is Eukaryotic translation initiation factor 3 subunit G (tif35) (Emericella nidulans (strain FGSC A4 / ATCC 38163 / CBS 112.46 / NRRL 194 / M139) (Aspergillus nidulans)).